The chain runs to 214 residues: Adenylate kinase (214 aa).

ATP is bound at residue 10–15 (GAGKGT). The NMP stretch occupies residues 30–59 (STGDMLRAAIKAGTELGKQAKTLMDAGQLV). AMP-binding positions include T31, R36, 57 to 59 (QLV), 85 to 88 (GFPR), and Q92. Residues 122–159 (GRRVHPASGRSYHVVYNPPKVEGKDDVTGEDLIIRADD) are LID. ATP-binding positions include R123 and 132 to 133 (SY). R156 and R167 together coordinate AMP. Residue Q200 coordinates ATP.

The protein belongs to the adenylate kinase family. As to quaternary structure, monomer.

It localises to the cytoplasm. The enzyme catalyses AMP + ATP = 2 ADP. It participates in purine metabolism; AMP biosynthesis via salvage pathway; AMP from ADP: step 1/1. Catalyzes the reversible transfer of the terminal phosphate group between ATP and AMP. Plays an important role in cellular energy homeostasis and in adenine nucleotide metabolism. The protein is Adenylate kinase of Actinobacillus succinogenes (strain ATCC 55618 / DSM 22257 / CCUG 43843 / 130Z).